The sequence spans 105 residues: Nitrogen fixation nifHD region glnB-like protein 1 (105 aa).

It belongs to the P(II) protein family.

Functionally, could be involved in the regulation of nitrogen fixation. The polypeptide is Nitrogen fixation nifHD region glnB-like protein 1 (glnBI) (Methanococcus maripaludis (Methanococcus deltae)).